The sequence spans 166 residues: Cofilin-1 (166 aa).

A2 carries the post-translational modification N-acetylalanine. Phosphoserine is present on residues S3 and S8. The ADF-H domain occupies 4-153; sequence GVAVSDGVIK…KDRCTLAEKL (150 aa). K13 bears the N6-acetyllysine mark. T25 is subject to Phosphothreonine. A Nuclear localization signal motif is present at residues 30-34; it reads KKRKK. A Phosphoserine modification is found at S41. Y68 is modified (phosphotyrosine). At K73 the chain carries N6-acetyllysine. K132 is covalently cross-linked (Glycyl lysine isopeptide (Lys-Gly) (interchain with G-Cter in SUMO2)). Y140 carries the post-translational modification Phosphotyrosine. K144 carries the post-translational modification N6-acetyllysine. Position 156 is a phosphoserine (S156).

It belongs to the actin-binding proteins ADF family. As to quaternary structure, can bind G- and F-actin in a 1:1 ratio of cofilin to actin. It is a major component of intranuclear and cytoplasmic actin rods. Interacts with the subcortical maternal complex (SCMC) via interaction with TLE6 and NLRP5. Interacts with C9orf72. Inactivated by phosphorylation on Ser-3. Phosphorylated on Ser-3 in resting cells. Dephosphorylated by PDXP/chronophin; this restores its activity in promoting actin filament depolymerization. The phosphorylation of Ser-24 may prevent recognition of the nuclear localization signal. Phosphorylated via a ARRB1-RAC1-LIMK1-PAK1 cascade upon active ligand stimulation of atypical chemokine receptor ACKR2.

The protein resides in the nucleus matrix. It localises to the cytoplasm. Its subcellular location is the cytoskeleton. The protein localises to the cell projection. It is found in the ruffle membrane. The protein resides in the lamellipodium membrane. It localises to the lamellipodium. Its subcellular location is the growth cone. The protein localises to the axon. Functionally, binds to F-actin and exhibits pH-sensitive F-actin depolymerizing activity. Important for normal progress through mitosis and normal cytokinesis. In conjunction with the subcortical maternal complex (SCMC), plays an essential role for zygotes to progress beyond the first embryonic cell divisions via regulation of actin dynamics. Required for the centralization of the mitotic spindle and symmetric division of zygotes. Plays a role in the regulation of cell morphology and cytoskeletal organization in epithelial cells. Required for the up-regulation of atypical chemokine receptor ACKR2 from endosomal compartment to cell membrane, increasing its efficiency in chemokine uptake and degradation. Required for neural tube morphogenesis and neural crest cell migration. In Bos taurus (Bovine), this protein is Cofilin-1 (CFL1).